The chain runs to 1141 residues: Eukaryotic translation initiation factor 3 subunit A (1141 aa).

In terms of domain architecture, PCI spans 319–501 (LQRMAAHVLL…NSIYFGTDLT (183 aa)). 2 stretches are compositionally biased toward basic and acidic residues: residues 588-623 (QNNA…EERE) and 829-899 (AAEE…RGGD). Disordered regions lie at residues 588 to 631 (QNNA…QNEI) and 829 to 1141 (AAEE…VKRR). A Phosphoserine modification is found at S908. Composition is skewed to basic and acidic residues over residues 920–976 (ERND…EPDT), 990–1051 (SRDD…EPQR), 1059–1087 (DAPR…RGDQ), and 1110–1131 (TREE…KAGD).

This sequence belongs to the eIF-3 subunit A family. As to quaternary structure, component of the eukaryotic translation initiation factor 3 (eIF-3) complex. The eIF-3 complex interacts with pix.

Its subcellular location is the cytoplasm. In terms of biological role, RNA-binding component of the eukaryotic translation initiation factor 3 (eIF-3) complex, which is involved in protein synthesis of a specialized repertoire of mRNAs and, together with other initiation factors, stimulates binding of mRNA and methionyl-tRNAi to the 40S ribosome. The eIF-3 complex specifically targets and initiates translation of a subset of mRNAs involved in cell proliferation. The sequence is that of Eukaryotic translation initiation factor 3 subunit A from Drosophila sechellia (Fruit fly).